Here is a 357-residue protein sequence, read N- to C-terminus: Probable protein phosphatase 2C 60 (357 aa).

The 307-residue stretch at 23-329 (RYGLSSMQGW…DNMTMILVRF (307 aa)) folds into the PPM-type phosphatase domain. Mn(2+) contacts are provided by D57, G58, D272, and D320. A disordered region spans residues 331 to 357 (NPTPSETELKPEASQAEGNHDEPSSSN). The span at 348 to 357 (GNHDEPSSSN) shows a compositional bias: basic and acidic residues.

It belongs to the PP2C family. Mg(2+) is required as a cofactor. The cofactor is Mn(2+).

It catalyses the reaction O-phospho-L-seryl-[protein] + H2O = L-seryl-[protein] + phosphate. The catalysed reaction is O-phospho-L-threonyl-[protein] + H2O = L-threonyl-[protein] + phosphate. The polypeptide is Probable protein phosphatase 2C 60 (Arabidopsis thaliana (Mouse-ear cress)).